Reading from the N-terminus, the 339-residue chain is MSTHLRKLPGLLLCLLLALPAWYLGRLFPIIGAPVFAILLGMLLALFYHHRDKTKEGISFTSKYILQTAVVLLGFGLNLTQVMAVGMQSLPIIISTIATALLVAYGLQKWLRLDVNTATLVGIGSSICGGSAIAATAPVIKAKDDEVAKAISVIFLFNMLAALLFPSLGQLLGLSNEGFAIFAGTAVNDTSSVTATATAWDALHHSNTLDGATIVKLTRTLAILPITLGLSLYRAKKEHDIVTEENFSLRKSFPRFILFFLLASLITTLMTSLGVSADSFHSLKTLSKFFIVMAMAAIGLNTNLVKLIKTGGQAILLGSICWVAITLVSLAMQLSLGIW.

9 helical membrane passes run 7 to 24 (KLPG…AWYL), 28 to 50 (FPII…FYHH), 57 to 79 (GISF…GLNL), 84 to 106 (AVGM…VAYG), 118 to 140 (ATLV…APVI), 150 to 172 (AISV…GQLL), 256 to 275 (FILF…SLGV), 290 to 307 (FIVM…LVKL), and 314 to 336 (AILL…QLSL).

It belongs to the UPF0324 family.

It is found in the cell membrane. The sequence is that of UPF0324 membrane protein SpyM3_0740 from Streptococcus pyogenes serotype M3 (strain ATCC BAA-595 / MGAS315).